The following is a 304-amino-acid chain: D-alanine--D-alanine ligase (304 aa).

The 196-residue stretch at 104 to 299 folds into the ATP-grasp domain; that stretch reads KMVWLSCGLP…FEALCLAILA (196 aa). 130–185 contacts ATP; sequence ARDLGLPIFVKPVHEGSSMGATKVTEAGQLRAAWELAARYDSLVIAEEFISGQELT. Positions 253, 266, and 268 each coordinate Mg(2+).

The protein belongs to the D-alanine--D-alanine ligase family. Mg(2+) is required as a cofactor. Mn(2+) serves as cofactor.

It is found in the cytoplasm. The catalysed reaction is 2 D-alanine + ATP = D-alanyl-D-alanine + ADP + phosphate + H(+). It participates in cell wall biogenesis; peptidoglycan biosynthesis. Cell wall formation. The sequence is that of D-alanine--D-alanine ligase from Azoarcus sp. (strain BH72).